Consider the following 243-residue polypeptide: Ice-binding protein K1-A (243 aa).

An N-terminal signal peptide occupies residues 1–20 (MFSSTYLLAIIALAVSSVFA).

This sequence belongs to the ice-binding protein family.

The protein resides in the secreted. Functionally, binds to the surface of ice crystals. Inhibits growth of the ice crystals. Has antifreeze activity for survival under snow cover. Has high thermal hysteresis (TH) activity, which is the ability to lower the freezing point of an aqueous solution below its melting point, and thus the freezing of the cell fluid can be prevented protecting the organism from ice damage. The TH activity of this protein is 2.0 degrees Celsius at 0.11 mM. This chain is Ice-binding protein K1-A, found in Typhula ishikariensis (Gray snow mold fungus).